Reading from the N-terminus, the 389-residue chain is 8-amino-7-oxononanoate synthase (389 aa).

R19 lines the substrate pocket. A pyridoxal 5'-phosphate-binding site is contributed by 106–107; that stretch reads GY. A substrate-binding site is contributed by H131. Residues S178, 203-206, and 234-237 contribute to the pyridoxal 5'-phosphate site; these read DDAH and TLSK. Position 237 is an N6-(pyridoxal phosphate)lysine (K237). T351 is a binding site for substrate.

Belongs to the class-II pyridoxal-phosphate-dependent aminotransferase family. BioF subfamily. As to quaternary structure, homodimer. Pyridoxal 5'-phosphate is required as a cofactor.

The catalysed reaction is 6-carboxyhexanoyl-[ACP] + L-alanine + H(+) = (8S)-8-amino-7-oxononanoate + holo-[ACP] + CO2. Its pathway is cofactor biosynthesis; biotin biosynthesis. In terms of biological role, catalyzes the decarboxylative condensation of pimeloyl-[acyl-carrier protein] and L-alanine to produce 8-amino-7-oxononanoate (AON), [acyl-carrier protein], and carbon dioxide. Can also use pimeloyl-CoA instead of pimeloyl-ACP as substrate. The chain is 8-amino-7-oxononanoate synthase (bioF) from Lysinibacillus sphaericus (Bacillus sphaericus).